The sequence spans 120 residues: Holo-[acyl-carrier-protein] synthase (120 aa).

Positions 8 and 58 each coordinate Mg(2+).

The protein belongs to the P-Pant transferase superfamily. AcpS family. It depends on Mg(2+) as a cofactor.

It localises to the cytoplasm. It catalyses the reaction apo-[ACP] + CoA = holo-[ACP] + adenosine 3',5'-bisphosphate + H(+). In terms of biological role, transfers the 4'-phosphopantetheine moiety from coenzyme A to a Ser of acyl-carrier-protein. The protein is Holo-[acyl-carrier-protein] synthase of Streptococcus pneumoniae (strain Hungary19A-6).